The sequence spans 661 residues: mRNA 3'-end-processing protein RNA14 (661 aa).

The interval 1-37 is disordered; sequence MSGNETPDAGTVKSVSPSSGGSSLPARPTLRERDPND. Low complexity predominate over residues 14–23; the sequence is SVSPSSGGSS. 7 HAT repeats span residues 67–99, 101–135, 149–181, 192–225, 262–298, 307–339, and 513–548; these read QQVA…WELE, EESG…YVRR, TVLK…FLEQ, SRVE…WEQE, SLPT…WELD, VLRQ…FVDE, and YNLD…FFEK.

The protein resides in the nucleus. It localises to the cytoplasm. Its function is as follows. Component of the cleavage factor IA (CFIA) complex, which is involved in the endonucleolytic cleavage during polyadenylation-dependent pre-mRNA 3'-end formation. This is mRNA 3'-end-processing protein RNA14 (RNA14) from Eremothecium gossypii (strain ATCC 10895 / CBS 109.51 / FGSC 9923 / NRRL Y-1056) (Yeast).